The chain runs to 323 residues: Transcription factor MafB (323 aa).

K32 participates in a covalent cross-link: Glycyl lysine isopeptide (Lys-Gly) (interchain with G-Cter in SUMO). Residues 34 to 43 (EPLGRAERPG) are compositionally biased toward basic and acidic residues. Disordered regions lie at residues 34–78 (EPLG…PTEQ) and 116–210 (PVPQ…VEDR). The segment covering 54–76 (SLSSTPLSTPCSSVPSSPSFSPT) has biased composition (low complexity). 2 stretches are compositionally biased toward basic residues: residues 129-143 (GAHH…HPHH) and 159-168 (AHPHHHHHHQ). Positions 192 to 201 (PHATASATAA) are enriched in low complexity. The interval 238–263 (RLKQKRRTLKNRGYAQSCRYKRVQQK) is basic motif. A bZIP domain is found at 238–301 (RLKQKRRTLK…DAHKVKCEKL (64 aa)). The leucine-zipper stretch occupies residues 266 to 287 (LENEKTQLIQQVEQLKQEVSRL). Residue K297 forms a Glycyl lysine isopeptide (Lys-Gly) (interchain with G-Cter in SUMO) linkage.

This sequence belongs to the bZIP family. Maf subfamily. As to quaternary structure, homodimer or heterodimer with other bHLH-Zip transcription factors. Binds DNA as a homodimer or a heterodimer. Forms homodimers and heterodimers with FOS, FOSB and FOSL2, but not with JUN proteins (JUN, JUNB and JUND). Interacts with PAX6; the interaction is direct. Interacts with ETS1 and LRP1. Interacts with the intracellular cytoplasmic domain of LRP1 (LRPICD); the interaction results in a moderate reduction of MAFB transcriptional potential. Sumoylated. Sumoylation on Lys-32 and Lys-297 stimulates its transcriptional repression activity and promotes macrophage differentiation from myeloid progenitors.

The protein resides in the nucleus. In terms of biological role, acts as a transcriptional activator or repressor. Plays a pivotal role in regulating lineage-specific hematopoiesis by repressing ETS1-mediated transcription of erythroid-specific genes in myeloid cells. Required for monocytic, macrophage, osteoclast, podocyte and islet beta cell differentiation. Involved in renal tubule survival and F4/80 maturation. Activates the insulin and glucagon promoters. Together with PAX6, transactivates weakly the glucagon gene promoter through the G1 element. SUMO modification controls its transcriptional activity and ability to specify macrophage fate. Binds element G1 on the glucagon promoter. Involved either as an oncogene or as a tumor suppressor, depending on the cell context. Required for the transcriptional activation of HOXB3 in the rhombomere r5 in the hindbrain. This is Transcription factor MafB (MAFB) from Macaca fascicularis (Crab-eating macaque).